A 53-amino-acid chain; its full sequence is UPF0391 membrane protein YPTS_0599 (53 aa).

2 helical membrane passes run 4 to 24 (WGIIFLIIALIAAALGFGGLA) and 27 to 47 (AAWAAKVVFVVGIILFLISLF).

This sequence belongs to the UPF0391 family.

The protein resides in the cell membrane. This chain is UPF0391 membrane protein YPTS_0599, found in Yersinia pseudotuberculosis serotype IB (strain PB1/+).